The chain runs to 185 residues: ATP synthase subunit b 2 (185 aa).

Positions 1-26 (MAQGHGDAKGTTAHTEAGGGHKAPFP) are disordered. A helical transmembrane segment spans residues 37 to 57 (LVSLAIAFVALYLIVSKIALP).

It belongs to the ATPase B chain family. As to quaternary structure, F-type ATPases have 2 components, F(1) - the catalytic core - and F(0) - the membrane proton channel. F(1) has five subunits: alpha(3), beta(3), gamma(1), delta(1), epsilon(1). F(0) has three main subunits: a(1), b(2) and c(10-14). The alpha and beta chains form an alternating ring which encloses part of the gamma chain. F(1) is attached to F(0) by a central stalk formed by the gamma and epsilon chains, while a peripheral stalk is formed by the delta and b chains.

The protein localises to the cell inner membrane. In terms of biological role, f(1)F(0) ATP synthase produces ATP from ADP in the presence of a proton or sodium gradient. F-type ATPases consist of two structural domains, F(1) containing the extramembraneous catalytic core and F(0) containing the membrane proton channel, linked together by a central stalk and a peripheral stalk. During catalysis, ATP synthesis in the catalytic domain of F(1) is coupled via a rotary mechanism of the central stalk subunits to proton translocation. Functionally, component of the F(0) channel, it forms part of the peripheral stalk, linking F(1) to F(0). The b'-subunit is a diverged and duplicated form of b found in plants and photosynthetic bacteria. The chain is ATP synthase subunit b 2 (atpF2) from Rhodopseudomonas palustris (strain ATCC BAA-98 / CGA009).